The primary structure comprises 364 residues: Adenosine 3'-phospho 5'-phosphosulfate transporter 2 (364 aa).

The next 10 membrane-spanning stretches (helical) occupy residues 39-59, 74-94, 106-126, 131-151, 157-177, 187-206, 231-251, 257-277, 281-301, and 310-330; these read WLQFVLLSLAIFILYIGYGYM, WTLTLIQFLIYSGCGYTECII, IYGVIAFFTVATMGLSNASVG, PTQVIFKCCKLIPVLIGGILI, GWIDIGAAMLMSLGIIMFTLA, SRGYIMICGALLADAVIGNI, VFIFAFVVLSGEVFSAIPFFL, TFGYALILSCLGYLGVNVVLT, VFGALVAVTVTTLRKALTIIL, and FTIEYVYAGSVVMLAIYLNLY.

Belongs to the nucleotide-sugar transporter family. SLC35B subfamily.

Its subcellular location is the golgi apparatus membrane. Its function is as follows. Mediates the transport of adenosine 3'-phospho 5'-phosphosulfate (PAPS), from cytosol into Golgi. PAPS is a universal sulfuryl donor for sulfation events that take place in the Golgi. The chain is Adenosine 3'-phospho 5'-phosphosulfate transporter 2 (pst-2) from Caenorhabditis elegans.